The following is a 236-amino-acid chain: Phosphoribosylaminoimidazole-succinocarboxamide synthase (236 aa).

This sequence belongs to the SAICAR synthetase family.

It catalyses the reaction 5-amino-1-(5-phospho-D-ribosyl)imidazole-4-carboxylate + L-aspartate + ATP = (2S)-2-[5-amino-1-(5-phospho-beta-D-ribosyl)imidazole-4-carboxamido]succinate + ADP + phosphate + 2 H(+). It functions in the pathway purine metabolism; IMP biosynthesis via de novo pathway; 5-amino-1-(5-phospho-D-ribosyl)imidazole-4-carboxamide from 5-amino-1-(5-phospho-D-ribosyl)imidazole-4-carboxylate: step 1/2. This chain is Phosphoribosylaminoimidazole-succinocarboxamide synthase, found in Campylobacter curvus (strain 525.92).